A 203-amino-acid chain; its full sequence is Shikimate kinase (203 aa).

Gly32–Ala37 contacts ATP. Position 36 (Thr36) interacts with Mg(2+). Substrate is bound by residues Asp54, Arg78, and Gly100. Arg138 contributes to the ATP binding site. Arg157 contacts substrate.

This sequence belongs to the shikimate kinase family. In terms of assembly, monomer. The cofactor is Mg(2+).

It localises to the cytoplasm. The catalysed reaction is shikimate + ATP = 3-phosphoshikimate + ADP + H(+). It functions in the pathway metabolic intermediate biosynthesis; chorismate biosynthesis; chorismate from D-erythrose 4-phosphate and phosphoenolpyruvate: step 5/7. In terms of biological role, catalyzes the specific phosphorylation of the 3-hydroxyl group of shikimic acid using ATP as a cosubstrate. This Mesorhizobium japonicum (strain LMG 29417 / CECT 9101 / MAFF 303099) (Mesorhizobium loti (strain MAFF 303099)) protein is Shikimate kinase.